Consider the following 485-residue polypeptide: Probable cobyric acid synthase (485 aa).

One can recognise a GATase cobBQ-type domain in the interval 250-435 (EIEIAVIRLP…LHGLFDNKNI (186 aa)). Cys-328 functions as the Nucleophile in the catalytic mechanism. His-427 is a catalytic residue.

This sequence belongs to the CobB/CobQ family. CobQ subfamily.

Its pathway is cofactor biosynthesis; adenosylcobalamin biosynthesis. Functionally, catalyzes amidations at positions B, D, E, and G on adenosylcobyrinic A,C-diamide. NH(2) groups are provided by glutamine, and one molecule of ATP is hydrogenolyzed for each amidation. In Methanosarcina barkeri (strain Fusaro / DSM 804), this protein is Probable cobyric acid synthase.